A 732-amino-acid chain; its full sequence is MMSGVMTAVSNRWDPGAVRALAEARHGDAFAVLGAHPSDNGRFLRTYLPGADRVSAVLDDGQVVALDAGPEPGLFAGELPAHGGYRLRIGWPGGEQETADPYAFGPQLSDFDLHLISEGHHLQLADALGANVVEVDGVRGTRFAVWAPNASRVAVVGDFNSWDARRHPMRLRHQAGVWELFVPDVGPGAHYKYQLRGPHGHELPAKADPVARRAELAPGTASIVADPTPHQWSDDGWMATRARRQAHDAPMSIYEIHAGSWLREAGLDLDWDGLADRLIPYVADMGFTHVELMPVSEHPFGGSWGYQPLGLFAPTARFGTPDGFARFVDRCHREGIGVIVDWVPAHFPTDAHGLAHFDGTALYEHADPREGFHRDWNTLIYNHGRREVSGFLIASAMEFLQRYHVDGLRVDAVASMLYRDYSRNAGEWIPNIHGGRENYETIAFLRRLNEVVREHTPGAVMIAEESTAFPGVTADVAHGGLGFHYKWNMGWMHDTLHYAGLDPIYRRYHHGELTFSMVYAYSERFVLPISHDEVVHGKGSLLGRMPGDDWQRFANLRAYLGFMFTHPGRKLLFMGCEFGQPTEWNHDAGLPWHLLDDPRHRGVQTLVRDLNRLYVQYPALHAHDDDPSGFAWVVGDDAGNSVVAFLRKGKRGDAPVLVVINFTPVVQHGYRIGVPQGGQWREVFNSDAGIYGGSNLGNGGSVTAEQQSMHGHAQSLPLLLPPLGAIVLTPYG.

Residue D411 is the Nucleophile of the active site. E464 serves as the catalytic Proton donor.

It belongs to the glycosyl hydrolase 13 family. GlgB subfamily. Monomer.

It carries out the reaction Transfers a segment of a (1-&gt;4)-alpha-D-glucan chain to a primary hydroxy group in a similar glucan chain.. It participates in glycan biosynthesis; glycogen biosynthesis. Functionally, catalyzes the formation of the alpha-1,6-glucosidic linkages in glycogen by scission of a 1,4-alpha-linked oligosaccharide from growing alpha-1,4-glucan chains and the subsequent attachment of the oligosaccharide to the alpha-1,6 position. The protein is 1,4-alpha-glucan branching enzyme GlgB 1 of Xanthomonas euvesicatoria pv. vesicatoria (strain 85-10) (Xanthomonas campestris pv. vesicatoria).